We begin with the raw amino-acid sequence, 333 residues long: MLKIAIDVMGADNGVTPIVQGVIQALKSRDFNAVIIGDEAQIAPLVPPYLQSRAQIVHCTDYIRMEESASAAAKRTQSSIFKTTELLKNGDVDALVSPGHSGATMSLATLKIGRIKGVSRPAICTTMPNTTDKPSIILDAGANTDCKPEYLVDFAIMGYEYAKNVIGFENPRVGLLSNGEEDNKGNELTKATFKLLKEFSFFKGNVEGRDIFNGSVDVIVCDGFSGNLVLKASEGVASAMSSVLKKDIKSCLCSMFGALFLRGVFKRLKKKMDHSEYGGAPLLGVQKVVIISHGSANARAIECAIYQALNAIESNICSKLSDAFANKPSSAQQ.

The protein belongs to the PlsX family. As to quaternary structure, homodimer. Probably interacts with PlsY.

Its subcellular location is the cytoplasm. It catalyses the reaction a fatty acyl-[ACP] + phosphate = an acyl phosphate + holo-[ACP]. Its pathway is lipid metabolism; phospholipid metabolism. Functionally, catalyzes the reversible formation of acyl-phosphate (acyl-PO(4)) from acyl-[acyl-carrier-protein] (acyl-ACP). This enzyme utilizes acyl-ACP as fatty acyl donor, but not acyl-CoA. In Helicobacter hepaticus (strain ATCC 51449 / 3B1), this protein is Phosphate acyltransferase.